A 109-amino-acid polypeptide reads, in one-letter code: Mannose-specific lectin (109 aa).

The 109-residue stretch at 1–109 (DNILYSSEVL…PPIWATGTGR (109 aa)) folds into the Bulb-type lectin domain. Cysteine 29 and cysteine 52 form a disulfide bridge. A propeptide spanning residues 79-82 (TGTN) is cleaved from the precursor.

Homotrimer or homotetramer.

It localises to the secreted. Functionally, mannose-specific lectin. Shows agglutinating activity toward rabbit erythrocytes and mitogenic activity towards mouse lymphocytes. The protein is Mannose-specific lectin of Aloe arborescens (Kidachi aloe).